We begin with the raw amino-acid sequence, 429 residues long: DNA polymerase delta small subunit (429 aa).

This sequence belongs to the DNA polymerase delta/II small subunit family. Heterodimer with subunits of 125 kDa and 50 kDa.

It is found in the nucleus. The enzyme catalyses DNA(n) + a 2'-deoxyribonucleoside 5'-triphosphate = DNA(n+1) + diphosphate. Its function is as follows. The function of the small subunit is not yet clear. This chain is DNA polymerase delta small subunit (POLD2), found in Oryza sativa subsp. japonica (Rice).